Reading from the N-terminus, the 288-residue chain is Acetyl-coenzyme A carboxylase carboxyl transferase subunit beta (288 aa).

A CoA carboxyltransferase N-terminal domain is found at 34 to 288; it reads LFAKCPACKH…HLVAFHGGVS (255 aa). Cys-38, Cys-41, Cys-56, and Cys-59 together coordinate Zn(2+). A C4-type zinc finger spans residues 38-59; it reads CPACKHMIYQKDLGPAKICPTC.

The protein belongs to the AccD/PCCB family. In terms of assembly, acetyl-CoA carboxylase is a heterohexamer composed of biotin carboxyl carrier protein (AccB), biotin carboxylase (AccC) and two subunits each of ACCase subunit alpha (AccA) and ACCase subunit beta (AccD). The cofactor is Zn(2+).

Its subcellular location is the cytoplasm. It carries out the reaction N(6)-carboxybiotinyl-L-lysyl-[protein] + acetyl-CoA = N(6)-biotinyl-L-lysyl-[protein] + malonyl-CoA. Its pathway is lipid metabolism; malonyl-CoA biosynthesis; malonyl-CoA from acetyl-CoA: step 1/1. Functionally, component of the acetyl coenzyme A carboxylase (ACC) complex. Biotin carboxylase (BC) catalyzes the carboxylation of biotin on its carrier protein (BCCP) and then the CO(2) group is transferred by the transcarboxylase to acetyl-CoA to form malonyl-CoA. This Streptococcus equi subsp. zooepidemicus (strain H70) protein is Acetyl-coenzyme A carboxylase carboxyl transferase subunit beta.